The following is a 166-amino-acid chain: Photosystem I assembly protein Ycf3 (166 aa).

TPR repeat units lie at residues 35-68 (AFVY…EVDP), 72-105 (SFIF…NPSL), and 120-153 (GEQA…APLN).

It belongs to the Ycf3 family.

The protein localises to the plastid. It is found in the chloroplast thylakoid membrane. In terms of biological role, essential for the assembly of the photosystem I (PSI) complex. May act as a chaperone-like factor to guide the assembly of the PSI subunits. This chain is Photosystem I assembly protein Ycf3, found in Ostreococcus tauri.